The chain runs to 339 residues: 3-isopropylmalate dehydrogenase (339 aa).

Substrate contacts are provided by Arg-88, Arg-98, Arg-122, and Asp-212. Mg(2+) is bound by residues Asp-212, Asp-236, and Asp-240. 272 to 284 (GSAPDIAGKGIAD) provides a ligand contact to NAD(+).

The protein belongs to the isocitrate and isopropylmalate dehydrogenases family. LeuB type 2 subfamily. Homodimer. It depends on Mg(2+) as a cofactor. Requires Mn(2+) as cofactor.

The protein localises to the cytoplasm. It catalyses the reaction (2R,3S)-3-isopropylmalate + NAD(+) = 4-methyl-2-oxopentanoate + CO2 + NADH. Its pathway is amino-acid biosynthesis; L-leucine biosynthesis; L-leucine from 3-methyl-2-oxobutanoate: step 3/4. Catalyzes the oxidation of 3-carboxy-2-hydroxy-4-methylpentanoate (3-isopropylmalate) to 3-carboxy-4-methyl-2-oxopentanoate. The product decarboxylates to 4-methyl-2 oxopentanoate. This is 3-isopropylmalate dehydrogenase from Corynebacterium aurimucosum (strain ATCC 700975 / DSM 44827 / CIP 107346 / CN-1) (Corynebacterium nigricans).